A 311-amino-acid polypeptide reads, in one-letter code: HPr kinase/phosphorylase (311 aa).

Residues His-138 and Lys-159 contribute to the active site. ATP is bound at residue 153 to 160 (GDSGIGKS). Ser-160 is a binding site for Mg(2+). Residue Asp-177 is the Proton acceptor; for phosphorylation activity. Proton donor; for dephosphorylation activity of the active site. Residues 201-210 (LEIRGVGIID) form an important for the catalytic mechanism of both phosphorylation and dephosphorylation region. Residue Glu-202 participates in Mg(2+) binding. Residue Arg-243 is part of the active site. Residues 264–269 (PVKTGR) form an important for the catalytic mechanism of dephosphorylation region.

This sequence belongs to the HPrK/P family. In terms of assembly, homohexamer. Requires Mg(2+) as cofactor.

The catalysed reaction is [HPr protein]-L-serine + ATP = [HPr protein]-O-phospho-L-serine + ADP + H(+). It carries out the reaction [HPr protein]-O-phospho-L-serine + phosphate + H(+) = [HPr protein]-L-serine + diphosphate. Its function is as follows. Catalyzes the ATP- as well as the pyrophosphate-dependent phosphorylation of a specific serine residue in HPr, a phosphocarrier protein of the phosphoenolpyruvate-dependent sugar phosphotransferase system (PTS). HprK/P also catalyzes the pyrophosphate-producing, inorganic phosphate-dependent dephosphorylation (phosphorolysis) of seryl-phosphorylated HPr (P-Ser-HPr). The two antagonistic activities of HprK/P are regulated by several intracellular metabolites, which change their concentration in response to the absence or presence of rapidly metabolisable carbon sources (glucose, fructose, etc.) in the growth medium. Therefore, by controlling the phosphorylation state of HPr, HPrK/P is a sensor enzyme that plays a major role in the regulation of carbon metabolism and sugar transport: it mediates carbon catabolite repression (CCR), and regulates PTS-catalyzed carbohydrate uptake and inducer exclusion. The chain is HPr kinase/phosphorylase from Streptococcus gordonii (strain Challis / ATCC 35105 / BCRC 15272 / CH1 / DL1 / V288).